We begin with the raw amino-acid sequence, 189 residues long: Adenylate kinase (189 aa).

ATP is bound at residue 11 to 16 (GSGKGT). Residues 31-60 (STGDVLRAEIKKGTELGKTAKGYIDQGQLL) form an NMP region. AMP is bound by residues Thr32, Arg37, 58-60 (QLL), 86-89 (GFPR), and Gln93. The segment at 127–137 (KRGQESGRADD) is LID. ATP is bound at residue Arg128. Arg134 and Arg145 together coordinate AMP. An ATP-binding site is contributed by Gly173.

Belongs to the adenylate kinase family. As to quaternary structure, monomer.

It is found in the cytoplasm. The catalysed reaction is AMP + ATP = 2 ADP. It functions in the pathway purine metabolism; AMP biosynthesis via salvage pathway; AMP from ADP: step 1/1. Its function is as follows. Catalyzes the reversible transfer of the terminal phosphate group between ATP and AMP. Plays an important role in cellular energy homeostasis and in adenine nucleotide metabolism. This chain is Adenylate kinase, found in Phocaeicola vulgatus (strain ATCC 8482 / DSM 1447 / JCM 5826 / CCUG 4940 / NBRC 14291 / NCTC 11154) (Bacteroides vulgatus).